The sequence spans 109 residues: Thioredoxin 2 (109 aa).

Positions 2-109 (SGKYFEATDQ…IAKKLDEHIG (108 aa)) constitute a Thioredoxin domain. A disulfide bond links C33 and C36.

It belongs to the thioredoxin family.

Participates in various redox reactions through the reversible oxidation of its active center dithiol to a disulfide and catalyzes dithiol-disulfide exchange reactions. In Chlorobaculum tepidum (strain ATCC 49652 / DSM 12025 / NBRC 103806 / TLS) (Chlorobium tepidum), this protein is Thioredoxin 2 (trx2).